The chain runs to 422 residues: Probable D-serine dehydratase (422 aa).

N6-(pyridoxal phosphate)lysine is present on lysine 105.

Belongs to the serine/threonine dehydratase family. DsdA subfamily. Pyridoxal 5'-phosphate serves as cofactor.

It catalyses the reaction D-serine = pyruvate + NH4(+). This chain is Probable D-serine dehydratase, found in Carboxydothermus hydrogenoformans (strain ATCC BAA-161 / DSM 6008 / Z-2901).